The following is a 321-amino-acid chain: AA9 family lytic polysaccharide monooxygenase C (321 aa).

The signal sequence occupies residues methionine 1–alanine 18. Histidine 19 is a Cu(2+) binding site. Asparagine 33 is a glycosylation site (N-linked (GlcNAc...) asparagine). Cystine bridges form between cysteine 57-cysteine 191 and cysteine 161-cysteine 242. Histidine 103 contacts Cu(2+). O2 contacts are provided by histidine 177 and glutamine 186. Tyrosine 188 provides a ligand contact to Cu(2+). The N-linked (GlcNAc...) asparagine glycan is linked to asparagine 195. In terms of domain architecture, CBM1 spans glycine 283–leucine 319.

Belongs to the polysaccharide monooxygenase AA9 family. Cu(2+) is required as a cofactor.

The protein localises to the secreted. The catalysed reaction is [(1-&gt;4)-beta-D-glucosyl]n+m + reduced acceptor + O2 = 4-dehydro-beta-D-glucosyl-[(1-&gt;4)-beta-D-glucosyl]n-1 + [(1-&gt;4)-beta-D-glucosyl]m + acceptor + H2O.. In terms of biological role, major lytic polysaccharide monooxygenase (LPMO) that depolymerizes crystalline and amorphous polysaccharides via the oxidation of scissile alpha- or beta-(1-4)-glycosidic bonds, yielding C1 and C4 oxidation products. Catalysis by LPMOs requires the reduction of the active-site copper from Cu(II) to Cu(I) by a reducing agent and H(2)O(2) or O(2) as a cosubstrate. The protein is AA9 family lytic polysaccharide monooxygenase C of Botryotinia fuckeliana (strain B05.10) (Noble rot fungus).